The primary structure comprises 396 residues: Tryptophan synthase beta chain (396 aa).

The residue at position 86 (K86) is an N6-(pyridoxal phosphate)lysine.

This sequence belongs to the TrpB family. Tetramer of two alpha and two beta chains. Pyridoxal 5'-phosphate serves as cofactor.

The catalysed reaction is (1S,2R)-1-C-(indol-3-yl)glycerol 3-phosphate + L-serine = D-glyceraldehyde 3-phosphate + L-tryptophan + H2O. Its pathway is amino-acid biosynthesis; L-tryptophan biosynthesis; L-tryptophan from chorismate: step 5/5. In terms of biological role, the beta subunit is responsible for the synthesis of L-tryptophan from indole and L-serine. This Aliivibrio fischeri (strain MJ11) (Vibrio fischeri) protein is Tryptophan synthase beta chain.